The chain runs to 105 residues: Large ribosomal subunit protein uL24 (105 aa).

It belongs to the universal ribosomal protein uL24 family. In terms of assembly, part of the 50S ribosomal subunit.

In terms of biological role, one of two assembly initiator proteins, it binds directly to the 5'-end of the 23S rRNA, where it nucleates assembly of the 50S subunit. Functionally, one of the proteins that surrounds the polypeptide exit tunnel on the outside of the subunit. The chain is Large ribosomal subunit protein uL24 from Psychrobacter sp. (strain PRwf-1).